The primary structure comprises 148 residues: NADPH-dependent 7-cyano-7-deazaguanine reductase (148 aa).

Catalysis depends on cysteine 50, which acts as the Thioimide intermediate. The active-site Proton donor is the aspartate 57. Substrate is bound by residues 72-74 (VES) and 91-92 (HE).

This sequence belongs to the GTP cyclohydrolase I family. QueF type 1 subfamily.

It is found in the cytoplasm. The catalysed reaction is 7-aminomethyl-7-carbaguanine + 2 NADP(+) = 7-cyano-7-deazaguanine + 2 NADPH + 3 H(+). It functions in the pathway tRNA modification; tRNA-queuosine biosynthesis. In terms of biological role, catalyzes the NADPH-dependent reduction of 7-cyano-7-deazaguanine (preQ0) to 7-aminomethyl-7-deazaguanine (preQ1). The sequence is that of NADPH-dependent 7-cyano-7-deazaguanine reductase from Helicobacter pylori (strain HPAG1).